A 102-amino-acid chain; its full sequence is Protein translation factor SUI1 homolog (102 aa).

It belongs to the SUI1 family.

This Nitrosopumilus maritimus (strain SCM1) protein is Protein translation factor SUI1 homolog.